The primary structure comprises 171 residues: Putative charged multivesicular body protein 4B-like protein CHMP4BP1 (171 aa).

Over residues 1 to 17 the composition is skewed to basic and acidic residues; sequence MLSKKQEFLEKKIEQRH. 2 disordered regions span residues 1–24 and 132–171; these read MLSK…NKPA and EQEE…KTTT.

It belongs to the SNF7 family.

In Homo sapiens (Human), this protein is Putative charged multivesicular body protein 4B-like protein CHMP4BP1 (CHMP4BP1).